The sequence spans 188 residues: Putative manganese efflux pump MntP (188 aa).

6 helical membrane-spanning segments follow: residues Ile2–Val22, Leu39–Leu59, Ile67–Ile87, Ile107–Leu127, Val129–Gly149, and Leu166–Phe186.

Belongs to the MntP (TC 9.B.29) family.

It localises to the cell membrane. Its function is as follows. Probably functions as a manganese efflux pump. This is Putative manganese efflux pump MntP from Desulfitobacterium hafniense (strain Y51).